Here is a 63-residue protein sequence, read N- to C-terminus: U-reduvitoxin-Pr4a (63 aa).

An N-terminal signal peptide occupies residues 1–19 (MKIFGLFLLIATYMALAFA). 3 cysteine pairs are disulfide-bonded: Cys-24-Cys-40, Cys-31-Cys-45, and Cys-39-Cys-52.

The protein belongs to the venom Ptu1-like knottin family. In terms of tissue distribution, expressed by the venom gland.

It is found in the secreted. In terms of biological role, binds reversibly and blocks P/Q-type voltage-gated calcium channels (Cav). In Platymeris rhadamanthus (Red spot assassin bug), this protein is U-reduvitoxin-Pr4a.